The following is a 225-amino-acid chain: Glutathione S-transferase Mu 3 (225 aa).

A GST N-terminal domain is found at 5 to 92 (SSMVLGYWDI…YIARKHNMCG (88 aa)). Glutathione is bound by residues 11 to 12 (YW), 50 to 54 (WLDVK), and 63 to 64 (NL). Residue lysine 54 forms a Glycyl lysine isopeptide (Lys-Gly) (interchain with G-Cter in SUMO2) linkage. Lysine 73 participates in a covalent cross-link: Glycyl lysine isopeptide (Lys-Gly) (interchain with G-Cter in SUMO2). 76 to 77 (QS) serves as a coordination point for glutathione. A GST C-terminal domain is found at 94–212 (TEEEKIRVDI…QSDQFFKMPI (119 aa)). A substrate-binding site is contributed by tyrosine 120.

It belongs to the GST superfamily. Mu family. Homodimer.

Its subcellular location is the cytoplasm. It carries out the reaction RX + glutathione = an S-substituted glutathione + a halide anion + H(+). In terms of biological role, conjugation of reduced glutathione to a wide number of exogenous and endogenous hydrophobic electrophiles. May govern uptake and detoxification of both endogenous compounds and xenobiotics at the testis and brain blood barriers. This chain is Glutathione S-transferase Mu 3 (GSTM3), found in Macaca fuscata fuscata (Japanese macaque).